The chain runs to 464 residues: tRNA modification GTPase MnmE (464 aa).

Residues Arg-27, Glu-90, and Lys-129 each coordinate (6S)-5-formyl-5,6,7,8-tetrahydrofolate. The region spanning 222 to 384 is the TrmE-type G domain; the sequence is GVTLVLAGSV…LYDRIRSFIA (163 aa). GTP-binding positions include 232-237, 251-257, and 276-279; these read NVGKSS, SSYAGTT, and DTAG. Ser-236 lines the Mg(2+) pocket. Ser-251 contributes to the K(+) binding site. Mg(2+) is bound at residue Thr-257. A (6S)-5-formyl-5,6,7,8-tetrahydrofolate-binding site is contributed by Lys-464.

This sequence belongs to the TRAFAC class TrmE-Era-EngA-EngB-Septin-like GTPase superfamily. TrmE GTPase family. Homodimer. Heterotetramer of two MnmE and two MnmG subunits. The cofactor is K(+).

The protein resides in the cytoplasm. Functionally, exhibits a very high intrinsic GTPase hydrolysis rate. Involved in the addition of a carboxymethylaminomethyl (cmnm) group at the wobble position (U34) of certain tRNAs, forming tRNA-cmnm(5)s(2)U34. In Borrelia recurrentis (strain A1), this protein is tRNA modification GTPase MnmE.